We begin with the raw amino-acid sequence, 395 residues long: Dihydroorotate dehydrogenase (quinone), mitochondrial (395 aa).

The N-terminal 10 residues, 1-10 (MAWRQLRKRA), are a transit peptide targeting the mitochondrion; not cleaved. At 1–10 (MAWRQLRKRA) the chain is on the mitochondrial matrix side. Residues 11–30 (LDAAIILGGGGLLFTSYLTA) form a helical membrane-spanning segment. The Mitochondrial intermembrane portion of the chain corresponds to 31-395 (TGDDHFYAEY…TDAIGVDHRR (365 aa)). FMN is bound by residues 95-99 (AGFDK) and S119. K99 contributes to the substrate binding site. Residue 144 to 148 (NRYGF) participates in substrate binding. 2 residues coordinate FMN: N180 and N211. 211–216 (NVSSPN) serves as a coordination point for substrate. S214 functions as the Nucleophile in the catalytic mechanism. 2 residues coordinate FMN: K254 and T282. 283–284 (NT) lines the substrate pocket. Residues G305, G334, and 355-356 (YT) each bind FMN.

It belongs to the dihydroorotate dehydrogenase family. Type 2 subfamily. Monomer. FMN is required as a cofactor. Post-translationally, the uncleaved transit peptide is required for mitochondrial targeting and proper membrane integration.

Its subcellular location is the mitochondrion inner membrane. The enzyme catalyses (S)-dihydroorotate + a quinone = orotate + a quinol. The protein operates within pyrimidine metabolism; UMP biosynthesis via de novo pathway; orotate from (S)-dihydroorotate (quinone route): step 1/1. In terms of biological role, catalyzes the conversion of dihydroorotate to orotate with quinone as electron acceptor. Required for UMP biosynthesis via de novo pathway. The protein is Dihydroorotate dehydrogenase (quinone), mitochondrial (Dhodh) of Mus musculus (Mouse).